Consider the following 259-residue polypeptide: MLKWLYRLMIELTNHSLSSKMIAIFTKSRLSALLIPSYAKIYDINQEEMEKNLKNYETLQQLFIRKLKAGTRPIDQTKNSVISPVDAIIEDIGVIRENSEIVVKGKTYSIAEMLGSDEAAKKYLNGLFIILYLSPSHYHRIHSPISGVVQKQWALGKKSYPVNRLGLKYGKRPLSKNYRMITEVAANGKHIAIVKIGAMFVNSIELTHASEHLTKGQEIAYFSFGSTVVLLFEKDSIELDERIVAPMGVKVGERIGYLK.

Active-site charge relay system; for autoendoproteolytic cleavage activity residues include D86, H142, and S226. The Schiff-base intermediate with substrate; via pyruvic acid; for decarboxylase activity role is filled by S226. S226 bears the Pyruvic acid (Ser); by autocatalysis mark.

It belongs to the phosphatidylserine decarboxylase family. PSD-B subfamily. Prokaryotic type I sub-subfamily. As to quaternary structure, heterodimer of a large membrane-associated beta subunit and a small pyruvoyl-containing alpha subunit. The cofactor is pyruvate. In terms of processing, is synthesized initially as an inactive proenzyme. Formation of the active enzyme involves a self-maturation process in which the active site pyruvoyl group is generated from an internal serine residue via an autocatalytic post-translational modification. Two non-identical subunits are generated from the proenzyme in this reaction, and the pyruvate is formed at the N-terminus of the alpha chain, which is derived from the carboxyl end of the proenzyme. The autoendoproteolytic cleavage occurs by a canonical serine protease mechanism, in which the side chain hydroxyl group of the serine supplies its oxygen atom to form the C-terminus of the beta chain, while the remainder of the serine residue undergoes an oxidative deamination to produce ammonia and the pyruvoyl prosthetic group on the alpha chain. During this reaction, the Ser that is part of the protease active site of the proenzyme becomes the pyruvoyl prosthetic group, which constitutes an essential element of the active site of the mature decarboxylase.

It is found in the cell membrane. The catalysed reaction is a 1,2-diacyl-sn-glycero-3-phospho-L-serine + H(+) = a 1,2-diacyl-sn-glycero-3-phosphoethanolamine + CO2. It participates in phospholipid metabolism; phosphatidylethanolamine biosynthesis; phosphatidylethanolamine from CDP-diacylglycerol: step 2/2. Functionally, catalyzes the formation of phosphatidylethanolamine (PtdEtn) from phosphatidylserine (PtdSer). This Geobacillus sp. (strain WCH70) protein is Phosphatidylserine decarboxylase proenzyme.